Here is a 1061-residue protein sequence, read N- to C-terminus: Transmembrane protease serine 9 (1061 aa).

Over 3-31 (PAAPDLQPVPEVTKGVPVPTPDSGCCRAA) the chain is Cytoplasmic. Residues 32 to 52 (VTTVVAISVASLTLGVLSAFL) traverse the membrane as a helical segment. The Extracellular portion of the chain corresponds to 53-1061 (SAQGVQVEHT…LGWIGQNIRE (1009 aa)). Positions 155 to 192 (HCPGNAFSCQNSQCVSKENPECDDRVDCSDGSDEAQCD) constitute an LDL-receptor class A domain. 4 disulfides stabilise this stretch: cysteine 156–cysteine 168, cysteine 163–cysteine 182, cysteine 176–cysteine 191, and cysteine 230–cysteine 246. A Peptidase S1 1 domain is found at 205–438 (IVGGAEAAPG…LRDWILEVTS (234 aa)). Catalysis depends on charge relay system residues histidine 245 and aspartate 294. Intrachain disulfides connect cysteine 328–cysteine 395, cysteine 360–cysteine 374, and cysteine 385–cysteine 414. The Charge relay system role is filled by serine 389. Residues 443–499 (PVVPTEAPAPITPSTPWPTSPESRVPNTTAKPTVAPTPAPLHPSTAAKPQECGARPA) form a disordered region. Residues 452 to 461 (PITPSTPWPT) are compositionally biased toward pro residues. Residues 462 to 476 (SPESRVPNTTAKPTV) are compositionally biased toward low complexity. Asparagine 469 carries N-linked (GlcNAc...) asparagine glycosylation. The Peptidase S1 2 domain maps to 506–738 (IVGGISAVSG…LKDWILKAMS (233 aa)). The cysteines at positions 531 and 547 are disulfide-linked. The active-site Charge relay system is the histidine 546. Asparagine 549 is a glycosylation site (N-linked (GlcNAc...) asparagine). The active-site Charge relay system is the aspartate 594. 3 disulfides stabilise this stretch: cysteine 628/cysteine 695, cysteine 660/cysteine 674, and cysteine 685/cysteine 714. Residues asparagine 640 and asparagine 665 are each glycosylated (N-linked (GlcNAc...) asparagine). The active-site Charge relay system is serine 689. The span at 740–752 (DPSSTAHPHTSST) shows a compositional bias: low complexity. Disordered regions lie at residues 740–771 (DPSSTAHPHTSSTRLIPSQPPTTTAAGLIPEA) and 790–810 (LNTTLSARSTTTRRQTPAPGT). The N-linked (GlcNAc...) asparagine glycan is linked to asparagine 791. The segment covering 792-808 (TTLSARSTTTRRQTPAP) has biased composition (low complexity). A Peptidase S1 3 domain is found at 830-1060 (IVGGSAASLG…VLGWIGQNIR (231 aa)). 4 disulfides stabilise this stretch: cysteine 856/cysteine 872, cysteine 951/cysteine 1017, cysteine 982/cysteine 996, and cysteine 1007/cysteine 1036.

It belongs to the peptidase S1 family. Proteolytically cleaved to generate 3 independent serine protease chains. The cleaved chains may remain attached to the membrane thanks to disulfide bonds. It is unclear whether cleavage always takes place.

The protein resides in the cell membrane. Its activity is regulated as follows. Inhibited by serine protease inhibitors PMSF and 4-(2-aminoethyl)benzenesulfonyl fluoride, but not by EDTA. Its function is as follows. Serase-1 and serase-2 are serine proteases that hydrolyze the peptides N-t-Boc-Gln-Ala-Arg-AMC and N-t-Boc-Gln-Gly-Arg-AMC. In contrast, N-t-Boc-Ala-Phe-Lys-AMC and N-t-Boc-Ala-Pro-Ala-AMC are not significantly hydrolyzed. The polypeptide is Transmembrane protease serine 9 (Tmprss9) (Rattus norvegicus (Rat)).